A 511-amino-acid polypeptide reads, in one-letter code: Chromosomal replication initiator protein DnaA (511 aa).

A domain I, interacts with DnaA modulators region spans residues 1-90; the sequence is MSVELWQQCV…KRSSAPRAAP (90 aa). The interval 91–174 is domain II; it reads NAPLAAAASQ…QVEGALKHTS (84 aa). The interval 133-162 is disordered; sequence VAAHDEPSRDSFDPMAGASSQQAPARAEQR. Positions 135 to 144 are enriched in basic and acidic residues; it reads AHDEPSRDSF. The tract at residues 175–391 is domain III, AAA+ region; that stretch reads YLNRTFTFEN…GALKRVIAHS (217 aa). Residues glycine 219, glycine 221, lysine 222, and threonine 223 each coordinate ATP. The tract at residues 392–511 is domain IV, binds dsDNA; that stretch reads HFMGRDITIE…YKNLLRTLTT (120 aa).

This sequence belongs to the DnaA family. Oligomerizes as a right-handed, spiral filament on DNA at oriC.

It is found in the cytoplasm. Functionally, plays an essential role in the initiation and regulation of chromosomal replication. ATP-DnaA binds to the origin of replication (oriC) to initiate formation of the DNA replication initiation complex once per cell cycle. Binds the DnaA box (a 9 base pair repeat at the origin) and separates the double-stranded (ds)DNA. Forms a right-handed helical filament on oriC DNA; dsDNA binds to the exterior of the filament while single-stranded (ss)DNA is stabiized in the filament's interior. The ATP-DnaA-oriC complex binds and stabilizes one strand of the AT-rich DNA unwinding element (DUE), permitting loading of DNA polymerase. After initiation quickly degrades to an ADP-DnaA complex that is not apt for DNA replication. Binds acidic phospholipids. The protein is Chromosomal replication initiator protein DnaA of Pseudomonas savastanoi pv. phaseolicola (strain 1448A / Race 6) (Pseudomonas syringae pv. phaseolicola (strain 1448A / Race 6)).